The chain runs to 35 residues: Conotoxin Ca15a (35 aa).

Residue P8 is modified to 4-hydroxyproline.

Post-translationally, contains 4 disulfide bonds. Expressed by the venom duct.

It is found in the secreted. This chain is Conotoxin Ca15a, found in Conus caracteristicus (Characteristic cone).